Reading from the N-terminus, the 898-residue chain is Netrin receptor UNC5A (898 aa).

Residues 1 to 25 form the signal peptide; the sequence is MAVRPGLWPALLGIVLTAWLRGSGA. Over 26–361 the chain is Extracellular; that stretch reads QQSATVANPV…TSSGPEDVAL (336 aa). An Ig-like domain is found at 44–141; it reads PHFLVEPEDV…SGTTKSQKAY (98 aa). 3 disulfide bridges follow: cysteine 65/cysteine 126, cysteine 77/cysteine 124, and cysteine 170/cysteine 221. Asparagine 107 and asparagine 218 each carry an N-linked (GlcNAc...) asparagine glycan. The Ig-like C2-type domain maps to 155 to 234; that stretch reads PLAKEVSLEQ…NIVARRRSAS (80 aa). 2 consecutive TSP type-1 domains span residues 242–296 and 298–350; these read NGGW…TLCP and DGSW…DLCL. 3 C-linked (Man) tryptophan glycosylation sites follow: tryptophan 245, tryptophan 248, and tryptophan 251. Intrachain disulfides connect cysteine 254–cysteine 291, cysteine 258–cysteine 295, and cysteine 269–cysteine 281. Tryptophan 301 and tryptophan 304 each carry a C-linked (Man) tryptophan glycan. 3 disulfide bridges follow: cysteine 310–cysteine 344, cysteine 314–cysteine 349, and cysteine 322–cysteine 334. Asparagine 343 is a glycosylation site (N-linked (GlcNAc...) asparagine). A helical transmembrane segment spans residues 362 to 382; that stretch reads YIGLVAVAVCLILLLLVLVLI. Residues 383-898 are Cytoplasmic-facing; the sequence is YCRKKEGLDS…GLFTVSEAEC (516 aa). The 144-residue stretch at 497–640 folds into the ZU5 domain; the sequence is NMAYGTFNFL…LGRFALVGEA (144 aa). The tract at residues 661–679 is interaction with DCC; sequence SLEYNIRVYCLHDTHDALK. The region spanning 817–897 is the Death domain; that stretch reads QKIITSLDPP…AGLFTVSEAE (81 aa).

The protein belongs to the unc-5 family. In terms of assembly, homodimer and homooligomer. Interacts with the cytoplasmic part of DCC. Interacts with MAGED1. Interacts with PRKCABP, possibly mediating some interaction with PKC. Interacts (via extracellular domain) with FLRT2 (via extracellular domain). Interacts (via extracellular domain) with FLRT3 (via extracellular domain). In terms of processing, phosphorylated on cytoplasmic tyrosine residues. Phosphorylated by PKC in vitro. Post-translationally, proteolytically cleaved by caspases during apoptosis. The cleavage does not take place when the receptor is associated with netrin ligand. Its cleavage by caspases is required to induce apoptosis. The two extracellular TSRs of UNC5A contain WxxWxxWxxC motifs that can be C-mannosylated on all tryptophans. DPY19L1 preferentially mannosylates the first two tryptophans and DPY19L3 prefers the third. C-mannosylation by DPY19L1 is required for transport of UNC5A from the endoplasmic reticulum to the cell surface. Restricted to central nervous system.

It localises to the cell membrane. Its subcellular location is the membrane raft. The protein resides in the cell projection. The protein localises to the neuron projection. Receptor for netrin required for axon guidance. Functions in the netrin signaling pathway and promotes neurite outgrowth in response to NTN1. Mediates axon repulsion of neuronal growth cones in the developing nervous system in response to netrin. Axon repulsion in growth cones may be mediated by its association with DCC that may trigger signaling for repulsion. It also acts as a dependence receptor required for apoptosis induction when not associated with netrin ligand. This is Netrin receptor UNC5A (Unc5a) from Mus musculus (Mouse).